The sequence spans 156 residues: Small ribosomal subunit protein uS7 (156 aa).

This sequence belongs to the universal ribosomal protein uS7 family. Part of the 30S ribosomal subunit. Contacts proteins S9 and S11.

Its function is as follows. One of the primary rRNA binding proteins, it binds directly to 16S rRNA where it nucleates assembly of the head domain of the 30S subunit. Is located at the subunit interface close to the decoding center, probably blocks exit of the E-site tRNA. The sequence is that of Small ribosomal subunit protein uS7 from Photobacterium profundum (strain SS9).